The following is a 123-amino-acid chain: N(4)-acetylcytidine amidohydrolase (123 aa).

In terms of domain architecture, ASCH spans 6–101; the sequence is ITFYQRFEAD…EIIFWVIQFS (96 aa). The Proton acceptor role is filled by Lys21. The active-site Nucleophile is the Ser24. Glu74 serves as the catalytic Proton donor.

The protein belongs to the N(4)-acetylcytidine amidohydrolase family.

The catalysed reaction is N(4)-acetylcytidine + H2O = cytidine + acetate + H(+). The enzyme catalyses N(4)-acetyl-2'-deoxycytidine + H2O = 2'-deoxycytidine + acetate + H(+). It carries out the reaction N(4)-acetylcytosine + H2O = cytosine + acetate + H(+). Its function is as follows. Catalyzes the hydrolysis of N(4)-acetylcytidine (ac4C). The sequence is that of N(4)-acetylcytidine amidohydrolase from Haemophilus influenzae (strain ATCC 51907 / DSM 11121 / KW20 / Rd).